Consider the following 413-residue polypeptide: Na(+)-translocating NADH-quinone reductase subunit B (413 aa).

The next 3 membrane-spanning stretches (helical) occupy residues 56 to 76 (MMILVWFAVFPAMFWGMYNVG), 123 to 143 (LLGAAYFLPIYAVVFLVGGFW), and 169 to 189 (IVPPTLPLWQAALGISFGVVI). Residue Thr236 is modified to FMN phosphoryl threonine. Helical transmembrane passes span 270 to 290 (GSIGEVSTLMILIGGAIIIFG), 297 to 317 (IVAGVMIGMIATAYLFNWIGS), 322 to 342 (LFAMPWYWHLVLGGFAFGMIF), 358 to 378 (WWYGGLIGVMCILIRVANPAY), and 381 to 401 (GMMLAILFANLFAPLFDYVVV).

This sequence belongs to the NqrB/RnfD family. In terms of assembly, composed of six subunits; NqrA, NqrB, NqrC, NqrD, NqrE and NqrF. Requires FMN as cofactor.

Its subcellular location is the cell inner membrane. The catalysed reaction is a ubiquinone + n Na(+)(in) + NADH + H(+) = a ubiquinol + n Na(+)(out) + NAD(+). In terms of biological role, NQR complex catalyzes the reduction of ubiquinone-1 to ubiquinol by two successive reactions, coupled with the transport of Na(+) ions from the cytoplasm to the periplasm. NqrA to NqrE are probably involved in the second step, the conversion of ubisemiquinone to ubiquinol. The protein is Na(+)-translocating NADH-quinone reductase subunit B of Yersinia pestis.